Here is a 200-residue protein sequence, read N- to C-terminus: Phospholipase A2 inhibitor LNF2 (200 aa).

The first 19 residues, 1 to 19, serve as a signal peptide directing secretion; the sequence is MKSLHTICLLFIFVARGNS. 8 disulfides stabilise this stretch: C22–C46, C25–C32, C39–C67, C73–C94, C95–C100, C118–C143, C136–C165, and C169–C191. The N-linked (GlcNAc...) asparagine glycan is linked to N176.

Belongs to the CNF-like-inhibitor family. Occurs as a mixture of oligomers. Tetrameric arrangement appears to be the predominant quaternary structure. In terms of tissue distribution, expressed by the liver.

It localises to the secreted. Functionally, inhibits the enzymatic activity of phospholipase A2 (PA2). The chain is Phospholipase A2 inhibitor LNF2 from Lachesis muta muta (Bushmaster).